Reading from the N-terminus, the 95-residue chain is Aspartyl/glutamyl-tRNA(Asn/Gln) amidotransferase subunit C (95 aa).

This sequence belongs to the GatC family. As to quaternary structure, heterotrimer of A, B and C subunits.

It carries out the reaction L-glutamyl-tRNA(Gln) + L-glutamine + ATP + H2O = L-glutaminyl-tRNA(Gln) + L-glutamate + ADP + phosphate + H(+). The enzyme catalyses L-aspartyl-tRNA(Asn) + L-glutamine + ATP + H2O = L-asparaginyl-tRNA(Asn) + L-glutamate + ADP + phosphate + 2 H(+). In terms of biological role, allows the formation of correctly charged Asn-tRNA(Asn) or Gln-tRNA(Gln) through the transamidation of misacylated Asp-tRNA(Asn) or Glu-tRNA(Gln) in organisms which lack either or both of asparaginyl-tRNA or glutaminyl-tRNA synthetases. The reaction takes place in the presence of glutamine and ATP through an activated phospho-Asp-tRNA(Asn) or phospho-Glu-tRNA(Gln). The sequence is that of Aspartyl/glutamyl-tRNA(Asn/Gln) amidotransferase subunit C from Phenylobacterium zucineum (strain HLK1).